A 549-amino-acid polypeptide reads, in one-letter code: Nectin-3 (549 aa).

The signal sequence occupies residues Met-1 to Ala-57. Positions Gly-58 to Thr-165 constitute an Ig-like V-type domain. Residues Gly-58–Thr-404 lie on the Extracellular side of the membrane. Residues Asn-73, Asn-83, Asn-125, Asn-186, Asn-222, and Asn-331 are each glycosylated (N-linked (GlcNAc...) asparagine). Cys-78 and Cys-148 are joined by a disulfide. Ig-like C2-type domains lie at Pro-170–Arg-258 and Pro-269–Tyr-354. Disulfide bonds link Cys-193–Cys-246 and Cys-291–Cys-338. The chain crosses the membrane as a helical span at residues Ile-405–Val-425. Residues Phe-426–Val-549 are Cytoplasmic-facing.

The protein belongs to the nectin family. In terms of assembly, cis- and trans-homodimer. Can form trans-heterodimers with NECTIN1, NECTIN2, PVR, IGSF4B/Necl-1 and with IGSF4. Interaction between NECTIN1 and NECTIN3 on the pre- and postsynaptic sites, respectively, initiates the formation of puncta adherentia junctions between axons and dendrites. Interacts (via Cytoplasmic domain) with AFDN, providing a connection with the actin cytoskeleton. Binds with low affinity to TIGIT. Ubiquitous with high expression in testes. Localized in spermatids at Sertoli-spermatid junctions. Expressed in ovarian granulosa cells, but only faintly expressed after ovulation.

Its subcellular location is the cell membrane. It localises to the postsynaptic cell membrane. The protein resides in the cell junction. It is found in the adherens junction. In terms of biological role, cell adhesion molecule that promotes cell-cell adhesion through heterophilic trans-interactions with nectins-like or other nectins, such as trans-interaction with NECTIN2 at Sertoli-spermatid junctions. Trans-interaction with PVR induces activation of CDC42 and RAC small G proteins through common signaling molecules such as SRC and RAP1. Induces endocytosis-mediated down-regulation of PVR from the cell surface, resulting in reduction of cell movement and proliferation. Involved in axon guidance by promoting contacts between the commissural axons and the floor plate cells. Also involved in the formation of cell-cell junctions, including adherens junctions and synapses. Promotes formation of checkerboard-like cellular pattern of hair cells and supporting cells in the auditory epithelium via heterophilic interaction with NECTIN1: NECTIN1 is present in the membrane of hair cells and associates with NECTIN3 on supporting cells, thereby mediating heterotypic adhesion between these two cell types. Plays a role in the morphology of the ciliary body. In Mus musculus (Mouse), this protein is Nectin-3.